A 57-amino-acid polypeptide reads, in one-letter code: uncharacterized protein (57 aa).

The segment at 1–57 (MANHRGGSGNFAEDRERASEAGKKGGQHSGGNFKNDPQRASEAGKKGGKSSHGKSDN) is disordered. Basic and acidic residues-rich tracts occupy residues 12–23 (AEDRERASEAGK) and 36–45 (DPQRASEAGK). Over residues 46 to 57 (KGGKSSHGKSDN) the composition is skewed to basic residues.

Belongs to the con-10 family.

This is an uncharacterized protein from Escherichia coli (strain K12).